The chain runs to 40 residues: Snaclec tokaracetin subunit beta (40 aa).

A disulfide bridge links Cys2 with Cys13. The C-type lectin domain occupies 9-40 (YDEHCYRVFQQKMNWEDAEKFCTQQHKGXHLX).

It belongs to the snaclec family. As to quaternary structure, heterodimer of subunits alpha and beta; disulfide-linked. As to expression, expressed by the venom gland.

The protein resides in the secreted. Its function is as follows. Platelet antagonist that specifically and reversibly binds to a site on platelet glycoprotein Ibalpha (GP1BA) close to or identical with the site for vWF binding. It inhibits the binding of vWF to platelets and vWF-dependent shear-induced platelet aggregation. This Protobothrops tokarensis (Tokara habu) protein is Snaclec tokaracetin subunit beta.